The primary structure comprises 355 residues: Protein DVR-1 (355 aa).

The signal sequence occupies residues 1 to 15 (MFLVLLRACLLTLSL). Positions 16–240 (CSPAEDDGLV…PLQCRSRRKR (225 aa)) are excised as a propeptide. N-linked (GlcNAc...) asparagine glycosylation is found at N108, N179, and N296. 3 disulfide bridges follow: C254/C320, C283/C352, and C287/C354.

This sequence belongs to the TGF-beta family. As to quaternary structure, homodimer. In terms of tissue distribution, abundant in ovaries and eggs, and equally distributed among all blastomeres.

Its subcellular location is the secreted. In terms of biological role, serves to facilitate the differentiation of either mesoderm or endoderm either as a cofactor in an instructive signal or by providing permissive environment. The chain is Protein DVR-1 (dvr1) from Danio rerio (Zebrafish).